The primary structure comprises 168 residues: Photosystem I assembly protein Ycf3 (168 aa).

TPR repeat units follow at residues 35–68 (AFTY…EIDP), 72–105 (SYIL…NPSL), and 120–153 (GEQA…APSN).

The protein belongs to the Ycf3 family.

Its subcellular location is the plastid. It is found in the chloroplast thylakoid membrane. Its function is as follows. Essential for the assembly of the photosystem I (PSI) complex. May act as a chaperone-like factor to guide the assembly of the PSI subunits. The chain is Photosystem I assembly protein Ycf3 from Physcomitrium patens (Spreading-leaved earth moss).